The sequence spans 528 residues: GMP synthase [glutamine-hydrolyzing] (528 aa).

One can recognise a Glutamine amidotransferase type-1 domain in the interval Lys3–Asp199. Cys83 acts as the Nucleophile in catalysis. Residues His174 and Glu176 contribute to the active site. One can recognise a GMPS ATP-PPase domain in the interval Trp200–Arg394. Ser227–Ser233 provides a ligand contact to ATP.

As to quaternary structure, homodimer.

It carries out the reaction XMP + L-glutamine + ATP + H2O = GMP + L-glutamate + AMP + diphosphate + 2 H(+). Its pathway is purine metabolism; GMP biosynthesis; GMP from XMP (L-Gln route): step 1/1. Catalyzes the synthesis of GMP from XMP. This is GMP synthase [glutamine-hydrolyzing] from Ehrlichia ruminantium (strain Gardel).